The primary structure comprises 700 residues: Elongation factor G (700 aa).

Residues 10–285 (DRTRNIGIMA…AVIDYLPSPL (276 aa)) form the tr-type G domain. Residues 19 to 26 (AHIDAGKT), 83 to 87 (DTPGH), and 137 to 140 (NKMD) each bind GTP.

The protein belongs to the TRAFAC class translation factor GTPase superfamily. Classic translation factor GTPase family. EF-G/EF-2 subfamily.

The protein resides in the cytoplasm. In terms of biological role, catalyzes the GTP-dependent ribosomal translocation step during translation elongation. During this step, the ribosome changes from the pre-translocational (PRE) to the post-translocational (POST) state as the newly formed A-site-bound peptidyl-tRNA and P-site-bound deacylated tRNA move to the P and E sites, respectively. Catalyzes the coordinated movement of the two tRNA molecules, the mRNA and conformational changes in the ribosome. The sequence is that of Elongation factor G from Lacticaseibacillus casei (strain BL23) (Lactobacillus casei).